The chain runs to 314 residues: Olfactory receptor 52B4 (314 aa).

Over 1–27 (MPTVNHSGTSHTVFHLLGIPGLQDQHM) the chain is Extracellular. An N-linked (GlcNAc...) asparagine glycan is attached at asparagine 5. Residues 28-48 (WISIPFFISYVTALLGNSLLI) traverse the membrane as a helical segment. Residues 49–56 (FIILTKRS) lie on the Cytoplasmic side of the membrane. A helical transmembrane segment spans residues 57–77 (LHEPMYLFLCMLAGADIVLST). Topologically, residues 78 to 101 (CTIPQALAIFWFRAGDISLDRCIT) are extracellular. Residues cysteine 99 and cysteine 191 are joined by a disulfide bond. Residues 102–122 (QLFFIHSTFISESGILLVMAF) traverse the membrane as a helical segment. The Cytoplasmic portion of the chain corresponds to 123–141 (DHYIAICYPLRYTTILTNA). The helical transmembrane segment at 142–162 (LIKKICVTVSLRSYGTIFPII) threads the bilayer. Topologically, residues 163–198 (FLLKRLTFCQNNIIPHTFCEHIGLAKYACNDIRINI) are extracellular. A helical membrane pass occupies residues 199–219 (WYGFSILMSTVVLDVVLIFIS). Topologically, residues 220 to 239 (YMLILHAVFHMPSPDACHKA) are cytoplasmic. Residues 240–260 (LNTFGSHVCIIILFYGSGIFT) traverse the membrane as a helical segment. The Extracellular segment spans residues 261 to 275 (ILTQRFGRHIPPCIH). A helical membrane pass occupies residues 276 to 296 (IPLANVCILAPPMLNPIIYGI). At 297-314 (KTKQIQEQVVQFLFIKQK) the chain is on the cytoplasmic side.

The protein belongs to the G-protein coupled receptor 1 family.

It is found in the cell membrane. In terms of biological role, odorant receptor. The sequence is that of Olfactory receptor 52B4 (OR52B4) from Homo sapiens (Human).